The sequence spans 490 residues: Cytochrome P450 2C29 (490 aa).

Residues 1–25 (MDLVVFLALTLSCLILLSLWRQSSG) form the signal peptide. N6-acetyllysine occurs at positions 249, 252, and 375. Cys435 contacts heme.

The protein belongs to the cytochrome P450 family. It depends on heme as a cofactor. Expressed in liver as well as in extrahepatic tissues including brain, kidney, lung, heart, and intestine.

Its subcellular location is the endoplasmic reticulum membrane. The protein resides in the microsome membrane. It carries out the reaction an organic molecule + reduced [NADPH--hemoprotein reductase] + O2 = an alcohol + oxidized [NADPH--hemoprotein reductase] + H2O + H(+). The enzyme catalyses (5Z,8Z,11Z,14Z)-eicosatetraenoate + reduced [NADPH--hemoprotein reductase] + O2 = 14,15-epoxy-(5Z,8Z,11Z)-eicosatrienoate + oxidized [NADPH--hemoprotein reductase] + H2O + H(+). It functions in the pathway lipid metabolism; arachidonate metabolism. Functionally, a cytochrome P450 monooxygenase that selectively catalyzes the epoxidation of 14,15 double bond of (5Z,8Z,11Z,14Z)-eicosatetraenoic acid (arachidonate) forming 14,15-epoxyeicosatrienoic acid (14,15-EET) regioisomer. Mechanistically, uses molecular oxygen inserting one oxygen atom into a substrate, and reducing the second into a water molecule, with two electrons provided by NADPH via cytochrome P450 reductase (CPR; NADPH--hemoprotein reductase). The polypeptide is Cytochrome P450 2C29 (Mus musculus (Mouse)).